Reading from the N-terminus, the 953-residue chain is Translation initiation factor IF-2 (953 aa).

2 disordered regions span residues 52 to 247 (KASK…LAEL) and 279 to 363 (TKLK…TERK). 3 stretches are compositionally biased toward basic and acidic residues: residues 80–89 (TGSEHVEKTQ), 98–111 (FKAE…EQAA), and 140–188 (QGDK…ENHK). Positions 191–207 (RFTNQKKQGRQEPQSKS) are enriched in polar residues. Positions 229-247 (RQSETRFRAQQEAKRLAEL) are enriched in basic and acidic residues. Residues 282 to 291 (KSSNISAKST) are compositionally biased toward polar residues. Residues 300-317 (ARPEKNRELTHHSQEGQK) are compositionally biased toward basic and acidic residues. Positions 322 to 338 (SWNSQNQVRNQKNSNWN) are enriched in low complexity. Residues 339-348 (KNKKTKKGKN) show a composition bias toward basic residues. One can recognise a tr-type G domain in the interval 454 to 623 (ERAPVVTIMG…LLVAEVEELK (170 aa)). The segment at 463–470 (GHVDHGKT) is G1. 463-470 (GHVDHGKT) is a GTP binding site. The tract at residues 488-492 (GITQH) is G2. Residues 509–512 (DTPG) form a G3 region. Residues 509–513 (DTPGH) and 563–566 (NKID) contribute to the GTP site. The G4 stretch occupies residues 563-566 (NKID). The G5 stretch occupies residues 599–601 (SAK).

The protein belongs to the TRAFAC class translation factor GTPase superfamily. Classic translation factor GTPase family. IF-2 subfamily.

Its subcellular location is the cytoplasm. Functionally, one of the essential components for the initiation of protein synthesis. Protects formylmethionyl-tRNA from spontaneous hydrolysis and promotes its binding to the 30S ribosomal subunits. Also involved in the hydrolysis of GTP during the formation of the 70S ribosomal complex. The chain is Translation initiation factor IF-2 from Streptococcus pyogenes serotype M5 (strain Manfredo).